Reading from the N-terminus, the 141-residue chain is Putative pre-16S rRNA nuclease (141 aa).

Belongs to the YqgF nuclease family.

Its subcellular location is the cytoplasm. Functionally, could be a nuclease involved in processing of the 5'-end of pre-16S rRNA. In Cupriavidus taiwanensis (strain DSM 17343 / BCRC 17206 / CCUG 44338 / CIP 107171 / LMG 19424 / R1) (Ralstonia taiwanensis (strain LMG 19424)), this protein is Putative pre-16S rRNA nuclease.